The chain runs to 174 residues: Neuromedin-U (174 aa).

The signal sequence occupies residues 1-34 (MLRTESCRPRSPAGQVAAASPLLLLLLLLAWCAG). Positions 35 to 103 (ACRGAPILPQ…EQDEKDNTKR (69 aa)) are excised as a propeptide. Position 139 is a methionine sulfoxide; partial (Met-139). Asn-166 is modified (asparagine amide). Residues 170 to 174 (SAGFI) constitute a propeptide that is removed on maturation.

This sequence belongs to the NmU family. Expressed throughout the enteric nervous system with highest levels being found in the jejunum.

The protein resides in the secreted. In terms of biological role, ligand for receptors NMUR1 and NMUR2. Stimulates muscle contractions of specific regions of the gastrointestinal tract. In humans, NmU stimulates contractions of the ileum and urinary bladder. Does not function as a ligand for either NMUR1 or NMUR2. Indirectly induces prolactin release although its potency is much lower than that of neuromedin precursor-related peptide 36. Its function is as follows. Does not function as a ligand for either NMUR1 or NMUR2. Indirectly induces prolactin release from lactotroph cells in the pituitary gland, probably via the hypothalamic dopaminergic system. The sequence is that of Neuromedin-U (NMU) from Homo sapiens (Human).